A 735-amino-acid chain; its full sequence is Zinc finger CCCH domain-containing protein 14 (735 aa).

The residue at position 1 (M1) is an N-acetylmethionine. The tract at residues 78–153 (TEPSSLKSPD…RHSYDDGAST (76 aa)) is disordered. S85 bears the Phosphoserine mark. Glycyl lysine isopeptide (Lys-Gly) (interchain with G-Cter in SUMO2) cross-links involve residues K99, K139, K175, and K198. The span at 131-144 (VSTSSQEQKSTNVR) shows a compositional bias: polar residues. S240 carries the post-translational modification Phosphoserine. Residues K245, K283, and K295 each participate in a glycyl lysine isopeptide (Lys-Gly) (interchain with G-Cter in SUMO2) cross-link. Residues 308 to 351 (FSHDGEEEEEDEDYGTRIGSLSSSVSVPAKPERRPSLPPSKQAN) form a disordered region. Residues S309, S327, and S343 each carry the phosphoserine modification. K357 bears the N6-acetyllysine; alternate mark. Residue K357 forms a Glycyl lysine isopeptide (Lys-Gly) (interchain with G-Cter in SUMO2); alternate linkage. A Glycyl lysine isopeptide (Lys-Gly) (interchain with G-Cter in SUMO2) cross-link involves residue K378. Residues S390 and S409 each carry the phosphoserine modification. The segment at 399-431 (VQGQNRAPRISPPVKEEEAKGDNTGKSQGTQQR) is disordered. Over residues 412-421 (VKEEEAKGDN) the composition is skewed to basic and acidic residues. A Glycyl lysine isopeptide (Lys-Gly) (interchain with G-Cter in SUMO2) cross-link involves residue K413. Over residues 422-431 (TGKSQGTQQR) the composition is skewed to polar residues. K489 participates in a covalent cross-link: Glycyl lysine isopeptide (Lys-Gly) (interchain with G-Cter in SUMO2). Phosphoserine is present on residues S498, S515, S527, and S620. 5 consecutive C3H1-type zinc fingers follow at residues 595–620 (EKLLERCKYWPACKNGDECVYHHPIS), 621–640 (PCKAFPNCKFAEKCLFVHPN), 641–656 (CKYDTKCTKADCPFTH), 681–698 (CRYFPACKKMECPFYHPK), and 700–718 (CRFNTQCTRPDCTFYHPTI).

This sequence belongs to the ZC3H14 family. As to quaternary structure, homodimer; facilitating circular RNAs (circRNAs) formation. Associates with the spliceosome. Interacts with HOOK2. Interacts with ZFC3H1 in a RNase-sensitive manner. Expressed in hippocampal pyramidal neurons (at protein level). Expressed in kidney, liver, muscle, heart brain and testes. Expressed in hippocampal pyramidal neurons.

Its subcellular location is the nucleus speckle. RNA-binding protein involved in the biogenesis of circular RNAs (circRNAs), which are produced by back-splicing circularization of pre-mRNAs. Acts by binding to both exon-intron boundary and 3'-UTR of pre-mRNAs to promote circRNA biogenesis through dimerization and the association with the spliceosome. Required for spermatogenesis via involvement in circRNA biogenesis. Regulates the pre-mRNA processing of ATP5MC1; preventing its degradation. Also binds the poly(A) tail of mRNAs; controlling poly(A) length in neuronal cells. This Mus musculus (Mouse) protein is Zinc finger CCCH domain-containing protein 14.